A 154-amino-acid chain; its full sequence is SsrA-binding protein (154 aa).

This sequence belongs to the SmpB family.

It is found in the cytoplasm. Required for rescue of stalled ribosomes mediated by trans-translation. Binds to transfer-messenger RNA (tmRNA), required for stable association of tmRNA with ribosomes. tmRNA and SmpB together mimic tRNA shape, replacing the anticodon stem-loop with SmpB. tmRNA is encoded by the ssrA gene; the 2 termini fold to resemble tRNA(Ala) and it encodes a 'tag peptide', a short internal open reading frame. During trans-translation Ala-aminoacylated tmRNA acts like a tRNA, entering the A-site of stalled ribosomes, displacing the stalled mRNA. The ribosome then switches to translate the ORF on the tmRNA; the nascent peptide is terminated with the 'tag peptide' encoded by the tmRNA and targeted for degradation. The ribosome is freed to recommence translation, which seems to be the essential function of trans-translation. The protein is SsrA-binding protein of Ruminiclostridium cellulolyticum (strain ATCC 35319 / DSM 5812 / JCM 6584 / H10) (Clostridium cellulolyticum).